Here is a 511-residue protein sequence, read N- to C-terminus: 2,3-bisphosphoglycerate-independent phosphoglycerate mutase (511 aa).

The Mn(2+) site is built by D18 and S68. S68 (phosphoserine intermediate) is an active-site residue. Substrate contacts are provided by residues H129, 159-160 (RD), R191, K197, 261-264 (RSDR), and K329. The Mn(2+) site is built by D396, H400, D437, H438, and H459. The tract at residues 442-464 (ERMTKQAPDGSVRPYGGHTTNPV) is disordered.

The protein belongs to the BPG-independent phosphoglycerate mutase family. As to quaternary structure, monomer. Mn(2+) is required as a cofactor.

It catalyses the reaction (2R)-2-phosphoglycerate = (2R)-3-phosphoglycerate. It functions in the pathway carbohydrate degradation; glycolysis; pyruvate from D-glyceraldehyde 3-phosphate: step 3/5. Its function is as follows. Catalyzes the interconversion of 2-phosphoglycerate and 3-phosphoglycerate. The sequence is that of 2,3-bisphosphoglycerate-independent phosphoglycerate mutase from Streptomyces coelicolor (strain ATCC BAA-471 / A3(2) / M145).